We begin with the raw amino-acid sequence, 363 residues long: Cytochrome P450 CYP82D47 (363 aa).

C342 serves as a coordination point for heme.

Belongs to the cytochrome P450 family. Requires heme as cofactor.

Probable heme-thiolate monooxygenase. This chain is Cytochrome P450 CYP82D47, found in Panax ginseng (Korean ginseng).